A 163-amino-acid chain; its full sequence is Neurotrophin-3 (163 aa).

Positions 1–3 (IQS) are cleaved as a signal peptide. Positions 4-119 (TSMDQGILTE…VLNRTSRRKR (116 aa)) are excised as a propeptide. N112 carries an N-linked (GlcNAc...) asparagine glycan.

It belongs to the NGF-beta family.

It localises to the secreted. Functionally, seems to promote the survival of visceral and proprioceptive sensory neurons. This chain is Neurotrophin-3 (NTF3), found in Eryx colubrinus colubrinus.